Consider the following 496-residue polypeptide: Angiopoietin-2 (496 aa).

A signal peptide spans 1–18; that stretch reads MWQIVFFTLSCDLVLAAA. N89, N119, N133, N151, N240, and N304 each carry an N-linked (GlcNAc...) asparagine glycan. Residues 166–248 are a coiled coil; the sequence is STNKLEKQIL…VNNSVLQKQQ (83 aa). Residues 275 to 495 enclose the Fibrinogen C-terminal domain; the sequence is KEEQISFRDC…ATTMMIRPAD (221 aa). Cysteines 284 and 313 form a disulfide. Residues D429, D431, C433, and C435 each contribute to the Ca(2+) site. Intrachain disulfides connect C433-C435 and C437-C450.

Interacts with TEK/TIE2, competing for the same binding site as ANGPT1. Interacts with ITGA5. Interacts with SVEP1/polydom. Interacts with THBD; this interaction significantly inhibits the generation of activated PC and TAFIa/CPB2 by the thrombin/thrombomodulin complex.

The protein localises to the secreted. Functionally, binds to TEK/TIE2, competing for the ANGPT1 binding site, and modulating ANGPT1 signaling. Can induce tyrosine phosphorylation of TEK/TIE2 in the absence of ANGPT1. In the absence of angiogenic inducers, such as VEGF, ANGPT2-mediated loosening of cell-matrix contacts may induce endothelial cell apoptosis with consequent vascular regression. In concert with VEGF, it may facilitate endothelial cell migration and proliferation, thus serving as a permissive angiogenic signal. Involved in the regulation of lymphangiogenesis. The chain is Angiopoietin-2 (ANGPT2) from Homo sapiens (Human).